The chain runs to 519 residues: Sodium-dependent dicarboxylate transporter SdcS (519 aa).

14 helical membrane passes run 29–49, 59–79, 103–123, 136–156, 159–179, 201–221, 241–261, 297–317, 322–342, 362–382, 395–415, 428–448, 451–471, and 490–510; these read VGQL…LLLF, VFVL…AIPI, AQYG…AIAM, IINT…IATG, SMFV…LAII, ALVL…LIGT, FAKW…LVWI, KVVL…EFLL, FTSE…LFLI, LPWG…GISE, LIEG…VLFL, ILPI…LLMV, AMAA…AIVF, and LLSI…VLGI.

This sequence belongs to the SLC13A/DASS transporter (TC 2.A.47) family. NADC subfamily.

The protein localises to the cell membrane. Mediates the transport of dicarboxylates across the cytoplasmic membrane via a Na(+)-electrochemical gradient. The protein is Sodium-dependent dicarboxylate transporter SdcS (sdcS) of Staphylococcus saprophyticus subsp. saprophyticus (strain ATCC 15305 / DSM 20229 / NCIMB 8711 / NCTC 7292 / S-41).